We begin with the raw amino-acid sequence, 103 residues long: Small ribosomal subunit protein uS10 (103 aa).

This sequence belongs to the universal ribosomal protein uS10 family. Part of the 30S ribosomal subunit.

Involved in the binding of tRNA to the ribosomes. This Campylobacter jejuni subsp. jejuni serotype O:6 (strain 81116 / NCTC 11828) protein is Small ribosomal subunit protein uS10.